Reading from the N-terminus, the 125-residue chain is Small ribosomal subunit protein uS13 (125 aa).

The protein belongs to the universal ribosomal protein uS13 family. In terms of assembly, part of the 30S ribosomal subunit. Forms a loose heterodimer with protein S19. Forms two bridges to the 50S subunit in the 70S ribosome.

Located at the top of the head of the 30S subunit, it contacts several helices of the 16S rRNA. In the 70S ribosome it contacts the 23S rRNA (bridge B1a) and protein L5 of the 50S subunit (bridge B1b), connecting the 2 subunits; these bridges are implicated in subunit movement. Contacts the tRNAs in the A and P-sites. This is Small ribosomal subunit protein uS13 from Granulibacter bethesdensis (strain ATCC BAA-1260 / CGDNIH1).